We begin with the raw amino-acid sequence, 402 residues long: 2,3-bisphosphoglycerate-independent phosphoglycerate mutase (402 aa).

The tract at residues 155 to 174 is disordered; it reads SMVSDSDPHRENERPMEVRP. A compositionally biased stretch (basic and acidic residues) spans 160 to 174; that stretch reads SDPHRENERPMEVRP.

The protein belongs to the BPG-independent phosphoglycerate mutase family. A-PGAM subfamily.

The catalysed reaction is (2R)-2-phosphoglycerate = (2R)-3-phosphoglycerate. The protein operates within carbohydrate degradation; glycolysis; pyruvate from D-glyceraldehyde 3-phosphate: step 3/5. Catalyzes the interconversion of 2-phosphoglycerate and 3-phosphoglycerate. This Picrophilus torridus (strain ATCC 700027 / DSM 9790 / JCM 10055 / NBRC 100828 / KAW 2/3) protein is 2,3-bisphosphoglycerate-independent phosphoglycerate mutase.